The sequence spans 366 residues: Probable cyclin-dependent kinase 10 (366 aa).

The 287-residue stretch at 7–293 (FEKLDSIGEG…ASDAIKHPFF (287 aa)) folds into the Protein kinase domain. ATP is bound by residues 13-21 (IGEGTYGIV) and Lys-36. The active-site Proton acceptor is Asp-132. The segment covering 315–358 (FKNQNKKQNNNFNNFVQNNQTNQNNQTNQNNQTNQNNKTSQNNN) has biased composition (low complexity). A disordered region spans residues 315–366 (FKNQNKKQNNNFNNFVQNNQTNQNNQTNQNNQTNQNNKTSQNNNMDSYKYSK).

The protein belongs to the protein kinase superfamily. CMGC Ser/Thr protein kinase family. CDC2/CDKX subfamily.

It catalyses the reaction L-seryl-[protein] + ATP = O-phospho-L-seryl-[protein] + ADP + H(+). The catalysed reaction is L-threonyl-[protein] + ATP = O-phospho-L-threonyl-[protein] + ADP + H(+). The sequence is that of Probable cyclin-dependent kinase 10 (cdk10) from Dictyostelium discoideum (Social amoeba).